A 405-amino-acid polypeptide reads, in one-letter code: Tryptophan synthase beta chain (405 aa).

Lys98 is subject to N6-(pyridoxal phosphate)lysine.

Belongs to the TrpB family. As to quaternary structure, tetramer of two alpha and two beta chains. Requires pyridoxal 5'-phosphate as cofactor.

It carries out the reaction (1S,2R)-1-C-(indol-3-yl)glycerol 3-phosphate + L-serine = D-glyceraldehyde 3-phosphate + L-tryptophan + H2O. Its pathway is amino-acid biosynthesis; L-tryptophan biosynthesis; L-tryptophan from chorismate: step 5/5. Its function is as follows. The beta subunit is responsible for the synthesis of L-tryptophan from indole and L-serine. The protein is Tryptophan synthase beta chain of Xylella fastidiosa (strain M12).